An 819-amino-acid polypeptide reads, in one-letter code: DNA topoisomerase 4 subunit A (819 aa).

The region spanning 30-496 is the Topo IIA-type catalytic domain; the sequence is LPDIRDGLKP…QIIEIDTASL (467 aa). Tyrosine 118 acts as the O-(5'-phospho-DNA)-tyrosine intermediate in catalysis.

The protein belongs to the type II topoisomerase GyrA/ParC subunit family. ParC type 2 subfamily. As to quaternary structure, heterotetramer composed of ParC and ParE.

It localises to the cell membrane. It catalyses the reaction ATP-dependent breakage, passage and rejoining of double-stranded DNA.. Its function is as follows. Topoisomerase IV is essential for chromosome segregation. It relaxes supercoiled DNA. Performs the decatenation events required during the replication of a circular DNA molecule. The protein is DNA topoisomerase 4 subunit A of Streptococcus pyogenes serotype M6 (strain ATCC BAA-946 / MGAS10394).